Here is a 239-residue protein sequence, read N- to C-terminus: Pyridoxine 5'-phosphate synthase (239 aa).

Residue N7 coordinates 3-amino-2-oxopropyl phosphate. 9–10 (DH) is a binding site for 1-deoxy-D-xylulose 5-phosphate. R18 lines the 3-amino-2-oxopropyl phosphate pocket. H43 serves as the catalytic Proton acceptor. 1-deoxy-D-xylulose 5-phosphate contacts are provided by R45 and H50. E70 functions as the Proton acceptor in the catalytic mechanism. T100 serves as a coordination point for 1-deoxy-D-xylulose 5-phosphate. The active-site Proton donor is the H191. 3-amino-2-oxopropyl phosphate-binding positions include G192 and 213-214 (GH).

Belongs to the PNP synthase family. In terms of assembly, homooctamer; tetramer of dimers.

The protein resides in the cytoplasm. It carries out the reaction 3-amino-2-oxopropyl phosphate + 1-deoxy-D-xylulose 5-phosphate = pyridoxine 5'-phosphate + phosphate + 2 H2O + H(+). The protein operates within cofactor biosynthesis; pyridoxine 5'-phosphate biosynthesis; pyridoxine 5'-phosphate from D-erythrose 4-phosphate: step 5/5. Catalyzes the complicated ring closure reaction between the two acyclic compounds 1-deoxy-D-xylulose-5-phosphate (DXP) and 3-amino-2-oxopropyl phosphate (1-amino-acetone-3-phosphate or AAP) to form pyridoxine 5'-phosphate (PNP) and inorganic phosphate. The sequence is that of Pyridoxine 5'-phosphate synthase from Pelobacter propionicus (strain DSM 2379 / NBRC 103807 / OttBd1).